An 842-amino-acid chain; its full sequence is Probable receptor-like protein kinase At5g61350 (842 aa).

A signal peptide spans 1-27; sequence MGGDFRHFSSHVSLLLLFLLIVKSSSS. The Extracellular portion of the chain corresponds to 28 to 425; sequence FTPADNYLID…IGGMSSKKLA (398 aa). 6 N-linked (GlcNAc...) asparagine glycosylation sites follow: N81, N125, N252, N294, N359, and N365. A helical transmembrane segment spans residues 426–446; that stretch reads IAGIGFVMALTAFLGVVVLLV. Topologically, residues 447–842 are cytoplasmic; that stretch reads RWQRRPKDWQ…EMQSPSHSIP (396 aa). A Protein kinase domain is found at 525–803; that stretch reads FDENAVCGVG…GDVLWNLEYA (279 aa). Residues 531–539 and K553 contribute to the ATP site; that span reads CGVGGFGKV. D655 serves as the catalytic Proton acceptor.

Belongs to the protein kinase superfamily. Ser/Thr protein kinase family.

The protein localises to the membrane. This is Probable receptor-like protein kinase At5g61350 from Arabidopsis thaliana (Mouse-ear cress).